Consider the following 364-residue polypeptide: Cobalt-precorrin-5B C(1)-methyltransferase (364 aa).

This sequence belongs to the CbiD family.

The enzyme catalyses Co-precorrin-5B + S-adenosyl-L-methionine = Co-precorrin-6A + S-adenosyl-L-homocysteine. It participates in cofactor biosynthesis; adenosylcobalamin biosynthesis; cob(II)yrinate a,c-diamide from sirohydrochlorin (anaerobic route): step 6/10. Functionally, catalyzes the methylation of C-1 in cobalt-precorrin-5B to form cobalt-precorrin-6A. This chain is Cobalt-precorrin-5B C(1)-methyltransferase, found in Thermoplasma acidophilum (strain ATCC 25905 / DSM 1728 / JCM 9062 / NBRC 15155 / AMRC-C165).